The following is a 160-amino-acid chain: Sperm protein associated with the nucleus on the X chromosome N2 (160 aa).

Disordered stretches follow at residues 1 to 48 (MEKP…TSEY) and 64 to 160 (SNQL…GEED). Positions 10–35 (GEKRKSPCDSNNRNDEMQETPNRDLA) are enriched in basic and acidic residues. Polar residues predominate over residues 64–79 (SNQLENDQSQENSVNP). Residues 81–97 (QEEEDEGSSQEDEDLDS) are compositionally biased toward acidic residues. Residues 136–148 (SSERSSQEEKDPD) are compositionally biased toward basic and acidic residues.

Belongs to the SPAN-X family.

In Pongo pygmaeus (Bornean orangutan), this protein is Sperm protein associated with the nucleus on the X chromosome N2 (SPANXN2).